The following is a 245-amino-acid chain: 3-deoxy-manno-octulosonate cytidylyltransferase (245 aa).

The protein belongs to the KdsB family.

Its subcellular location is the cytoplasm. The catalysed reaction is 3-deoxy-alpha-D-manno-oct-2-ulosonate + CTP = CMP-3-deoxy-beta-D-manno-octulosonate + diphosphate. The protein operates within nucleotide-sugar biosynthesis; CMP-3-deoxy-D-manno-octulosonate biosynthesis; CMP-3-deoxy-D-manno-octulosonate from 3-deoxy-D-manno-octulosonate and CTP: step 1/1. Its pathway is bacterial outer membrane biogenesis; lipopolysaccharide biosynthesis. Functionally, activates KDO (a required 8-carbon sugar) for incorporation into bacterial lipopolysaccharide in Gram-negative bacteria. In Rhodopseudomonas palustris (strain BisB5), this protein is 3-deoxy-manno-octulosonate cytidylyltransferase.